The primary structure comprises 250 residues: MGNLCVDVITLFPEMFSAITEYGITSRAVKQGLLQVTCWNPRDYTTDRHHTVDDRPFGGGPGMVMKIKPLEDALVSARQATGAAAKVIYLSPQGRKLTQQAVKGLAEQESLILIAGRYEGIDERFIEAHVDEEWSIGDYVLSGGELPAMVLIDAVTRLLPGALGHVDSAEEDSFTDGLLDCPHYTRPEVYADQRVPDVLLSGNHAHIRRWRMKQSLGRTFERRADLLESRSLSGEEKKLLEEYLRERDDS.

Residues Gly116 and 136 to 141 contribute to the S-adenosyl-L-methionine site; that span reads IGDYVL.

Belongs to the RNA methyltransferase TrmD family. Homodimer.

It localises to the cytoplasm. The enzyme catalyses guanosine(37) in tRNA + S-adenosyl-L-methionine = N(1)-methylguanosine(37) in tRNA + S-adenosyl-L-homocysteine + H(+). Its function is as follows. Specifically methylates guanosine-37 in various tRNAs. This chain is tRNA (guanine-N(1)-)-methyltransferase, found in Pseudomonas putida (strain GB-1).